A 282-amino-acid polypeptide reads, in one-letter code: MAEITASLVKELRERTGAGMMECKKALVEANGDIELAIDNMRKSGQAKAAKKAGRVAAEGVILARIGAGFGVLVEMNCETDFVAKDAGFLGLANEVADYALANKGVTIEALQAQFEEKRATLVAKIGENMNIRRVQFLDGDVVGSYLHGAKIGVLVAGKNADEDLLKKIAMHVAASRPEFVKPEDVSADVVAKEREIQVAIAMESGKPREIAEKMVEGRMKKFTGEVSLTGQPFVMDPAKSVGEFLKESGADVTNFVRFEVGEGIEKVESDFAAEVAAMQKI.

The involved in Mg(2+) ion dislocation from EF-Tu stretch occupies residues 80–83 (TDFV).

This sequence belongs to the EF-Ts family.

Its subcellular location is the cytoplasm. Functionally, associates with the EF-Tu.GDP complex and induces the exchange of GDP to GTP. It remains bound to the aminoacyl-tRNA.EF-Tu.GTP complex up to the GTP hydrolysis stage on the ribosome. The protein is Elongation factor Ts (tsf) of Pasteurella multocida (strain Pm70).